The sequence spans 354 residues: tRNA N6-adenosine threonylcarbamoyltransferase (354 aa).

Residues H111 and H115 each coordinate Fe cation. Substrate is bound by residues L134 to G138, D167, G180, and N279. D319 lines the Fe cation pocket.

The protein belongs to the KAE1 / TsaD family. Requires Fe(2+) as cofactor.

The protein resides in the cytoplasm. It catalyses the reaction L-threonylcarbamoyladenylate + adenosine(37) in tRNA = N(6)-L-threonylcarbamoyladenosine(37) in tRNA + AMP + H(+). In terms of biological role, required for the formation of a threonylcarbamoyl group on adenosine at position 37 (t(6)A37) in tRNAs that read codons beginning with adenine. Is involved in the transfer of the threonylcarbamoyl moiety of threonylcarbamoyl-AMP (TC-AMP) to the N6 group of A37, together with TsaE and TsaB. TsaD likely plays a direct catalytic role in this reaction. This Neisseria meningitidis serogroup C / serotype 2a (strain ATCC 700532 / DSM 15464 / FAM18) protein is tRNA N6-adenosine threonylcarbamoyltransferase.